The primary structure comprises 62 residues: Large ribosomal subunit protein bL28 (62 aa).

The protein belongs to the bacterial ribosomal protein bL28 family.

The chain is Large ribosomal subunit protein bL28 from Syntrophomonas wolfei subsp. wolfei (strain DSM 2245B / Goettingen).